The chain runs to 415 residues: Serine hydroxymethyltransferase 1 (415 aa).

(6S)-5,6,7,8-tetrahydrofolate contacts are provided by residues leucine 122 and 126-128 (GHL). An N6-(pyridoxal phosphate)lysine modification is found at lysine 230.

This sequence belongs to the SHMT family. Homodimer. Pyridoxal 5'-phosphate is required as a cofactor.

The protein localises to the cytoplasm. The catalysed reaction is (6R)-5,10-methylene-5,6,7,8-tetrahydrofolate + glycine + H2O = (6S)-5,6,7,8-tetrahydrofolate + L-serine. Its pathway is one-carbon metabolism; tetrahydrofolate interconversion. The protein operates within amino-acid biosynthesis; glycine biosynthesis; glycine from L-serine: step 1/1. Its function is as follows. Catalyzes the reversible interconversion of serine and glycine with tetrahydrofolate (THF) serving as the one-carbon carrier. This reaction serves as the major source of one-carbon groups required for the biosynthesis of purines, thymidylate, methionine, and other important biomolecules. Also exhibits THF-independent aldolase activity toward beta-hydroxyamino acids, producing glycine and aldehydes, via a retro-aldol mechanism. This Burkholderia mallei (strain ATCC 23344) protein is Serine hydroxymethyltransferase 1.